Here is a 502-residue protein sequence, read N- to C-terminus: MFS-type transporeter aprT (502 aa).

A disordered region spans residues 1–38 (MASPELASHHSDPSDGEGAPFLPGVDDESPESLNSDIP). 11 helical membrane-spanning segments follow: residues 45-65 (HGLI…GPMI), 114-136 (IGYR…GLLA), 150-170 (VGFV…NIFP), 175-195 (WFGA…ALFW), 214-234 (FGIA…FVMK), 239-259 (VPLM…NLLP), 302-322 (VAVI…AFLV), 336-356 (ATLL…FILP), 380-400 (VMLL…NTLI), 403-423 (LLLH…ITGL), and 464-484 (LWIG…ALVL). N-linked (GlcNAc...) asparagine glycosylation occurs at N495.

The protein belongs to the major facilitator superfamily.

It localises to the cell membrane. MFS-rype transporer; part of the gene cluster that mediates the biosynthesis of the asperipin-2a, a bicyclic peptide that possesses two macrocyclic ether rings consisting of 14- and 17-membered paracyclophans. AprT is likely to be involved in the cellular export of asperipin-2a. The polypeptide is MFS-type transporeter aprT (Aspergillus flavus (strain ATCC 200026 / FGSC A1120 / IAM 13836 / NRRL 3357 / JCM 12722 / SRRC 167)).